Reading from the N-terminus, the 160-residue chain is MGVFNYEAETTSVIPAARLFKAFILDGNKLIPKVSPQAVSSVENVEGNGGPGTIKKITFSEGSPVKYVKERVEEIDHTNFKYNYTVIEGDVLGDKLEKVSHELKIVAAPGGGSIVKISSKFHAKGYHEVNAEEMKGAKEMAEKLLRAVESYLLAHTAEYN.

Belongs to the BetVI family.

This is Major pollen allergen Car b 1 isoform 2 from Carpinus betulus (European hornbeam).